Here is a 173-residue protein sequence, read N- to C-terminus: Gamma-crystallin S-2 (173 aa).

Beta/gamma crystallin 'Greek key' domains follow at residues 2 to 40 (GKII…RVES) and 41 to 83 (DWWV…RVPT). A connecting peptide region spans residues 84-88 (HTQRP). 2 consecutive Beta/gamma crystallin 'Greek key' domains span residues 89–129 (YRMR…HVMG) and 130–172 (AYWI…RRIM).

This sequence belongs to the beta/gamma-crystallin family.

In terms of biological role, crystallins are the dominant structural components of the vertebrate eye lens. The polypeptide is Gamma-crystallin S-2 (GS-2) (Chiloscyllium indicum (Slender bamboo shark)).